A 179-amino-acid polypeptide reads, in one-letter code: MSSRILTSDVIGIDALLHDHHAVLAKSTGGAVAVFANNAPAFYAVTPARMAELLALEEKLSRPGSDVALDAQFYEEPEAAPVAIPCGKFAMYPAWQPDADFQRQAALWGVALREPVTAEELAAFIAYWQAEGKVFHHIQWQQKLARSVQISRSSNGGMPQRDINSVSEPDNHIPPGFRG.

Residues 151–168 (SRSSNGGMPQRDINSVSE) are compositionally biased toward polar residues. A disordered region spans residues 151 to 179 (SRSSNGGMPQRDINSVSEPDNHIPPGFRG).

It belongs to the DnaT family. In terms of assembly, homooligomerizes. Interacts with PriB. Component of the replication restart primosome. Primosome assembly occurs via a 'hand-off' mechanism. PriA binds to replication forks, subsequently PriB then DnaT bind; DnaT then displaces ssDNA to generate the helicase loading substrate.

Involved in the restart of stalled replication forks, which reloads the replicative helicase on sites other than the origin of replication. Can function in multiple replication restart pathways. Displaces ssDNA from a PriB-ssDNA complex. Probably forms a spiral filament on ssDNA. This is Replication restart protein DnaT from Salmonella schwarzengrund (strain CVM19633).